The sequence spans 211 residues: Small ribosomal subunit protein uS3c (211 aa).

The KH type-2 domain maps to 39 to 109 (IREFAESRLP…NVALYVTKTQ (71 aa)).

The protein belongs to the universal ribosomal protein uS3 family. In terms of assembly, part of the 30S ribosomal subunit.

The protein localises to the plastid. It is found in the chloroplast. The protein is Small ribosomal subunit protein uS3c (rps3) of Ostreococcus tauri.